The sequence spans 209 residues: Putative 3-methyladenine DNA glycosylase (209 aa).

The protein belongs to the DNA glycosylase MPG family.

This chain is Putative 3-methyladenine DNA glycosylase, found in Lactiplantibacillus plantarum (strain ATCC BAA-793 / NCIMB 8826 / WCFS1) (Lactobacillus plantarum).